The following is a 128-amino-acid chain: Large ribosomal subunit protein bL12 (128 aa).

The protein belongs to the bacterial ribosomal protein bL12 family. As to quaternary structure, homodimer. Part of the ribosomal stalk of the 50S ribosomal subunit. Forms a multimeric L10(L12)X complex, where L10 forms an elongated spine to which 2 to 4 L12 dimers bind in a sequential fashion. Binds GTP-bound translation factors.

Forms part of the ribosomal stalk which helps the ribosome interact with GTP-bound translation factors. Is thus essential for accurate translation. In Picosynechococcus sp. (strain ATCC 27264 / PCC 7002 / PR-6) (Agmenellum quadruplicatum), this protein is Large ribosomal subunit protein bL12.